Consider the following 249-residue polypeptide: ATP synthase subunit a 1 (249 aa).

Helical transmembrane passes span 26-46 (FTNVSAFMVATVVVASGFLYL), 84-104 (FFPFVFSLFMFVLVANFLGLF), 114-134 (IIVTFALAVLVIGTVIVYGFF), 143-163 (LFVPSGVPGIIVPLVVAIEII), 193-213 (FVVSLAALGPIGIGGAVLPLI), and 216-236 (VAITALEFLVAFLQAYVFTVL).

It belongs to the ATPase A chain family. In terms of assembly, F-type ATPases have 2 components, CF(1) - the catalytic core - and CF(0) - the membrane proton channel. CF(1) has five subunits: alpha(3), beta(3), gamma(1), delta(1), epsilon(1). CF(0) has three main subunits: a(1), b(2) and c(9-12). The alpha and beta chains form an alternating ring which encloses part of the gamma chain. CF(1) is attached to CF(0) by a central stalk formed by the gamma and epsilon chains, while a peripheral stalk is formed by the delta and b chains.

It localises to the cell inner membrane. Its function is as follows. Key component of the proton channel; it plays a direct role in the translocation of protons across the membrane. In Brucella anthropi (strain ATCC 49188 / DSM 6882 / CCUG 24695 / JCM 21032 / LMG 3331 / NBRC 15819 / NCTC 12168 / Alc 37) (Ochrobactrum anthropi), this protein is ATP synthase subunit a 1.